A 154-amino-acid chain; its full sequence is Protein X (154 aa).

The mitochondrial targeting sequence stretch occupies residues 68 to 117; sequence PCALRFTSARRMETTVNANQVLPKVLHKRTLGLSALSTTDLEAYFKDCVF.

Belongs to the orthohepadnavirus protein X family. In terms of assembly, may form homodimer. May interact with host CEBPA, CFLAR, CREB1, DDB1, E4F1, HBXIP, HSPD1/HSP60, NFKBIA, POLR2E and SMAD4. Interacts with host SMC5-SMC6 complex and induces its degradation. Interacts with host TRPC4AP; leading to prevent ubiquitination of TRPC4AP. Interacts with host PLSCR1; this interaction promotes ubiquitination and degradation of HBx and impairs HBx-mediated cell proliferation. In terms of processing, a fraction may be phosphorylated in insect cells and HepG2 cells, a human hepatoblastoma cell line. Phosphorylated in vitro by host protein kinase C or mitogen-activated protein kinase. N-acetylated in insect cells.

It is found in the host cytoplasm. Its subcellular location is the host nucleus. The protein resides in the host mitochondrion. Its function is as follows. Multifunctional protein that plays a role in silencing host antiviral defenses and promoting viral transcription. Does not seem to be essential for HBV infection. May be directly involved in development of cirrhosis and liver cancer (hepatocellular carcinoma). Most of cytosolic activities involve modulation of cytosolic calcium. The effect on apoptosis is controversial depending on the cell types in which the studies have been conducted. May induce apoptosis by localizing in mitochondria and causing loss of mitochondrial membrane potential. May also modulate apoptosis by binding host CFLAR, a key regulator of the death-inducing signaling complex (DISC). Promotes viral transcription by using the host E3 ubiquitin ligase DDB1 to target the SMC5-SMC6 complex to proteasomal degradation. This host complex would otherwise bind to viral episomal DNA, and prevents its transcription. Moderately stimulates transcription of many different viral and cellular transcription elements. Promoters and enhancers stimulated by HBx contain DNA binding sites for NF-kappa-B, AP-1, AP-2, c-EBP, ATF/CREB, or the calcium-activated factor NF-AT. The sequence is that of Protein X from Homo sapiens (Human).